Consider the following 492-residue polypeptide: N-succinylglutamate 5-semialdehyde dehydrogenase (492 aa).

Residue 220–225 (GRANTG) coordinates NAD(+). Active-site residues include Glu243 and Cys277.

Belongs to the aldehyde dehydrogenase family. AstD subfamily.

The enzyme catalyses N-succinyl-L-glutamate 5-semialdehyde + NAD(+) + H2O = N-succinyl-L-glutamate + NADH + 2 H(+). It functions in the pathway amino-acid degradation; L-arginine degradation via AST pathway; L-glutamate and succinate from L-arginine: step 4/5. Catalyzes the NAD-dependent reduction of succinylglutamate semialdehyde into succinylglutamate. The protein is N-succinylglutamate 5-semialdehyde dehydrogenase of Shigella boydii serotype 18 (strain CDC 3083-94 / BS512).